The chain runs to 294 residues: 33 kDa chaperonin (294 aa).

Cystine bridges form between cysteine 231-cysteine 233 and cysteine 264-cysteine 267.

The protein belongs to the HSP33 family. Under oxidizing conditions two disulfide bonds are formed involving the reactive cysteines. Under reducing conditions zinc is bound to the reactive cysteines and the protein is inactive.

It is found in the cytoplasm. Functionally, redox regulated molecular chaperone. Protects both thermally unfolding and oxidatively damaged proteins from irreversible aggregation. Plays an important role in the bacterial defense system toward oxidative stress. This Aeromonas salmonicida (strain A449) protein is 33 kDa chaperonin.